The primary structure comprises 89 residues: Small ribosomal subunit protein uS15 (89 aa).

This sequence belongs to the universal ribosomal protein uS15 family. Part of the 30S ribosomal subunit. Forms a bridge to the 50S subunit in the 70S ribosome, contacting the 23S rRNA.

Its function is as follows. One of the primary rRNA binding proteins, it binds directly to 16S rRNA where it helps nucleate assembly of the platform of the 30S subunit by binding and bridging several RNA helices of the 16S rRNA. Functionally, forms an intersubunit bridge (bridge B4) with the 23S rRNA of the 50S subunit in the ribosome. The chain is Small ribosomal subunit protein uS15 from Hyphomonas neptunium (strain ATCC 15444).